The following is a 247-amino-acid chain: 1-(5-phosphoribosyl)-5-[(5-phosphoribosylamino)methylideneamino] imidazole-4-carboxamide isomerase (247 aa).

The Proton acceptor role is filled by Asp16. The active-site Proton donor is the Asp135.

The protein belongs to the HisA/HisF family.

It localises to the cytoplasm. The catalysed reaction is 1-(5-phospho-beta-D-ribosyl)-5-[(5-phospho-beta-D-ribosylamino)methylideneamino]imidazole-4-carboxamide = 5-[(5-phospho-1-deoxy-D-ribulos-1-ylimino)methylamino]-1-(5-phospho-beta-D-ribosyl)imidazole-4-carboxamide. The protein operates within amino-acid biosynthesis; L-histidine biosynthesis; L-histidine from 5-phospho-alpha-D-ribose 1-diphosphate: step 4/9. The chain is 1-(5-phosphoribosyl)-5-[(5-phosphoribosylamino)methylideneamino] imidazole-4-carboxamide isomerase from Paenarthrobacter aurescens (strain TC1).